The primary structure comprises 377 residues: Chaperone protein DnaJ (377 aa).

A J domain is found at 5-70 (DYYEVLGLQK…QKRAAYDQYG (66 aa)). Residues 134 to 212 (GCKKDIRLST…CHGDGRVQKA (79 aa)) form a CR-type zinc finger. Residues cysteine 147, cysteine 150, cysteine 164, cysteine 167, cysteine 186, cysteine 189, cysteine 200, and cysteine 203 each coordinate Zn(2+). CXXCXGXG motif repeat units lie at residues 147 to 154 (CDNCHGTG), 164 to 171 (CPHCHGAG), 186 to 193 (CPSCHGTG), and 200 to 207 (CHSCHGDG).

It belongs to the DnaJ family. Homodimer. The cofactor is Zn(2+).

Its subcellular location is the cytoplasm. Functionally, participates actively in the response to hyperosmotic and heat shock by preventing the aggregation of stress-denatured proteins and by disaggregating proteins, also in an autonomous, DnaK-independent fashion. Unfolded proteins bind initially to DnaJ; upon interaction with the DnaJ-bound protein, DnaK hydrolyzes its bound ATP, resulting in the formation of a stable complex. GrpE releases ADP from DnaK; ATP binding to DnaK triggers the release of the substrate protein, thus completing the reaction cycle. Several rounds of ATP-dependent interactions between DnaJ, DnaK and GrpE are required for fully efficient folding. Also involved, together with DnaK and GrpE, in the DNA replication of plasmids through activation of initiation proteins. In Haemophilus ducreyi (strain 35000HP / ATCC 700724), this protein is Chaperone protein DnaJ.